We begin with the raw amino-acid sequence, 1170 residues long: Cellulose synthase-like protein D2 (1170 aa).

2 disordered regions span residues 1-75 and 269-295; these read MASN…PESG and NEVDNGGGGGGGGGLGGGDGQPAEFTS. Low complexity predominate over residues 10-24; that stretch reads RHSNSSRLSRMSYSG. Gly residues predominate over residues 273–288; it reads NGGGGGGGGGLGGGDG. Transmembrane regions (helical) follow at residues 311-331 and 341-361; these read VLSPYRLLILIRMAVLGLFLA and AMWLWGMSVVCELWFGLSWLL. Asp441 is an active-site residue. Residues 527 to 551 are a coiled coil; that stretch reads HAREEIKAMKRQREAALDDVVEAVK. Asp873 is a catalytic residue. 6 helical membrane-spanning segments follow: residues 955–975, 981–1001, 1027–1047, 1070–1090, 1104–1124, and 1134–1154; these read IFLIVYCFLPALSLFSGQFIV, TFLTYLLVITLTMCMLAVLEI, LAAVLQGLLKVIAGIEISFTL, SLMIPPIVIMMVNLIAIAVGF, LLGGVFFSFWVLAHLYPFAKG, and TIVFVWSGLLAITISLLWVAI.

The protein belongs to the glycosyltransferase 2 family. Plant cellulose synthase-like D subfamily.

It localises to the golgi apparatus membrane. Its function is as follows. Thought to be a Golgi-localized beta-glycan synthase that polymerize the backbones of noncellulosic polysaccharides (hemicelluloses) of plant cell wall. This Oryza sativa subsp. indica (Rice) protein is Cellulose synthase-like protein D2 (CSLD2).